We begin with the raw amino-acid sequence, 2367 residues long: Probable G-protein coupled receptor 179 (2367 aa).

A signal peptide spans 1–25 (MGTRGAVMPPPMWGLLGCCFVCAWA). Over 26–381 (LGGPRPIRSL…CLVEEAAVLR (356 aa)) the chain is Extracellular. A cache-like region region spans residues 62–245 (YLYSGDAQQL…CQEGRLRPGW (184 aa)). Asn75 is a glycosylation site (N-linked (GlcNAc...) asparagine). The cysteines at positions 76 and 236 are disulfide-linked. Residue Asn298 is glycosylated (N-linked (GlcNAc...) asparagine). The chain crosses the membrane as a helical span at residues 382–402 (AAVLACQACCMLAIFLSMLVS). Residues 403-415 (YRCRRNKRIWASG) are Cytoplasmic-facing. The helical transmembrane segment at 416-436 (VVLLETVLFGFLLLYFPVFIL) threads the bilayer. Residues 437–444 (YFKPSVFR) lie on the Extracellular side of the membrane. The helical transmembrane segment at 445–465 (CIALRWVRLLGFAIVYGTIIL) threads the bilayer. Cys445 and Cys537 form a disulfide bridge. Over 466 to 493 (KLYRVLQLFLSRTAQRSALLSSGRLLRR) the chain is Cytoplasmic. Residues 494 to 514 (LGLLLLPVLGFLAVWTVGALE) form a helical membrane-spanning segment. The Extracellular portion of the chain corresponds to 515–543 (RGIQHAPLVIRGHTPSGRHFYLCHHDRWD). A helical transmembrane segment spans residues 544-564 (YIMVVAELLLLCWGSFLCYAT). Topologically, residues 565-575 (RAVLSAFHEPR) are cytoplasmic. The chain crosses the membrane as a helical span at residues 576–594 (YMGIALHNELLLSAAFHTA). Residues 595–607 (RFVLVPSLHPDWT) are Extracellular-facing. The chain crosses the membrane as a helical span at residues 608-628 (LLLFFFHTHSTVTTTLALIFI). At 629–2367 (PKFWKLGAPP…PPTVYPWDWE (1739 aa)) the chain is on the cytoplasmic side. 12 disordered regions span residues 731–818 (ARQH…FRSA), 869–932 (REER…PHPP), 1039–1083 (KSRA…QQGS), 1098–1198 (RSTY…AGKT), 1247–1431 (EVTE…CPWE), 1537–1557 (PRES…SSKA), 1577–1672 (DLRP…ERPQ), 1723–1757 (AIRK…PTPE), 1823–1852 (SEGT…KGRL), 1886–2108 (AQAP…GSVE), 2133–2212 (WEAG…KEAG), and 2308–2367 (GVRE…WDWE). Over residues 738-759 (SGSPGHGSLPGSSRRRLLSSSL) the composition is skewed to low complexity. Basic and acidic residues predominate over residues 773–782 (STYDQRREQD). Basic and acidic residues predominate over residues 1039–1067 (KSRAGENEMDAEDAHHQREANDVDEDRPK). Over residues 1153–1164 (LQNQQNAHTSRM) the composition is skewed to polar residues. Basic and acidic residues-rich tracts occupy residues 1171 to 1181 (EGSREQEDRGR), 1277 to 1299 (RALR…KSEP), 1341 to 1362 (GRIR…EKPG), and 1390 to 1407 (EDGK…QEKQ). The span at 1615-1639 (ESQKDKEKMPGKSEIEDVTAWEKPE) shows a compositional bias: basic and acidic residues. 6 stretches are compositionally biased toward basic and acidic residues: residues 1840–1851 (AEQREKALEKGR), 1903–1920 (AEGH…RQDP), 1970–1979 (SHLDRQRPDQ), 2023–2054 (VTER…KSEP), 2061–2070 (KKPEMADFRQ), and 2165–2180 (TEEH…REQE). The segment covering 2326 to 2340 (PEPSLQEAESQSSSL) has biased composition (low complexity).

It belongs to the G-protein coupled receptor 3 family. As to quaternary structure, homodimer. Associates with the R7 group RGS-GNB5 complexes, composed of an R7 group RGS subunit (RGS6, RGS7, RGS9 or RGS11) and GNB5, promoting their localization to the cell membrane and regulating the GTPase activator activity of R7 RGS proteins. Interacts with TRPM1. Interacts with GRM6. Interacts with EGFLAM; transsynaptic interaction is required for synaptic organization of photoreceptor cells. In terms of tissue distribution, expressed in the retina.

Its subcellular location is the cell membrane. It localises to the postsynaptic cell membrane. The protein localises to the cell projection. It is found in the dendrite. Functionally, orphan receptor involved in vision. Required for signal transduction through retinal depolarizing bipolar cells. Acts as an atypical G-protein coupled receptor that recruits and regulates the R7 group RGS-GNB5 complexes instead of activating G proteins: promotes the GTPase activator activity of R7 RGS proteins, increasing the GTPase activity of G protein alpha subunits, thereby driving them into their inactive GDP-bound form. Associates with components of metabotropic signaling cascade in retina ON-bipolar neurons, such as TRPM1 and GRM6: may control the ability of the GRM6 cascade to gate TRPM1. The polypeptide is Probable G-protein coupled receptor 179 (Homo sapiens (Human)).